We begin with the raw amino-acid sequence, 238 residues long: Testis-specific gene A8 protein (238 aa).

The interval 35-238 (GKGAKTNKRG…GEAVATTTMT (204 aa)) is disordered. Basic residues predominate over residues 39–48 (KTNKRGKRGG). 8 repeat units span residues 79–93 (AAAAAPEAAASPESS), 94–108 (AAAAAPEAAASPESS), 109–123 (AAAAAPEAAASPESS), 124–138 (AAAAAPEAAASLESS), 153–158 (PAAPEA), 171–176 (PAAPEA), 180–185 (PAAPEA), and 189–194 (PAAPEA). The segment at 79–148 (AAAAAPEAAA…AAAAAPEAAA (70 aa)) is 4 X 15 AA tandem repeats of A-A-A-A-A-P-E-A-A-A-S-[PL]-E-S-S. Composition is skewed to low complexity over residues 79 to 200 (AAAA…AAPA) and 208 to 220 (WEAAAVVGEAAVK). A 4 X 6 AA repeats of P-A-A-P-E-A region spans residues 153–194 (PAAPEAAAAPEVAAAPATPAAPEATAAPAAPEAATTPAAPEA).

As to expression, specifically expressed in testis (at protein level).

The protein localises to the cytoplasm. It localises to the nucleus. The protein resides in the nucleoplasm. The sequence is that of Testis-specific gene A8 protein from Mus musculus (Mouse).